Consider the following 618-residue polypeptide: Chaperone protein HtpG (618 aa).

Residues 1–331 form an a; substrate-binding region; sequence MAKHTFQTEV…SEDLPLNVSR (331 aa). The b stretch occupies residues 332–541; the sequence is EILQQNRILA…EDDPNFAMIK (210 aa). A c region spans residues 542–618; the sequence is MMRQMGNALG…RLNAMLERAI (77 aa).

The protein belongs to the heat shock protein 90 family. In terms of assembly, homodimer.

It localises to the cytoplasm. Functionally, molecular chaperone. Has ATPase activity. The polypeptide is Chaperone protein HtpG (Wolinella succinogenes (strain ATCC 29543 / DSM 1740 / CCUG 13145 / JCM 31913 / LMG 7466 / NCTC 11488 / FDC 602W) (Vibrio succinogenes)).